Reading from the N-terminus, the 511-residue chain is Xylose import ATP-binding protein XylG (511 aa).

2 consecutive ABC transporter domains span residues 6-244 (LEMR…VGRE) and 261-506 (FEAR…IGKP). 38-45 (GENGAGKS) lines the ATP pocket.

It belongs to the ABC transporter superfamily. Xylose importer (TC 3.A.1.2.4) family. As to quaternary structure, the complex is composed of two ATP-binding proteins (XylG), two transmembrane proteins (XylH) and a solute-binding protein (XylF).

Its subcellular location is the cell inner membrane. It carries out the reaction D-xylose(out) + ATP + H2O = D-xylose(in) + ADP + phosphate + H(+). Its function is as follows. Part of the ABC transporter complex XylFGH involved in xylose import. Responsible for energy coupling to the transport system. This is Xylose import ATP-binding protein XylG from Brucella abortus (strain 2308).